The chain runs to 167 residues: Biotin carboxyl carrier protein of acetyl-CoA carboxylase (167 aa).

A disordered region spans residues 53 to 91; the sequence is SGFSQERPIPTDPKKDTIKETTTENSETSTTTSSGDFIS. A compositionally biased stretch (basic and acidic residues) spans 64–74; the sequence is DPKKDTIKETT. Residues 75 to 86 show a composition bias toward low complexity; sequence TENSETSTTTSS. The region spanning 87–163 is the Biotinyl-binding domain; the sequence is GDFISSPLVG…QFGSKLFRIA (77 aa). Lys-129 bears the N6-biotinyllysine mark.

Homodimer.

It functions in the pathway lipid metabolism; fatty acid biosynthesis. Its function is as follows. This protein is a component of the acetyl coenzyme A carboxylase complex; first, biotin carboxylase catalyzes the carboxylation of the carrier protein and then the transcarboxylase transfers the carboxyl group to form malonyl-CoA. The polypeptide is Biotin carboxyl carrier protein of acetyl-CoA carboxylase (accB) (Chlamydia pneumoniae (Chlamydophila pneumoniae)).